Consider the following 434-residue polypeptide: Methylenetetrahydrofolate--tRNA-(uracil-5-)-methyltransferase TrmFO (434 aa).

9 to 14 (GAGLAG) contacts FAD.

It belongs to the MnmG family. TrmFO subfamily. It depends on FAD as a cofactor.

Its subcellular location is the cytoplasm. The enzyme catalyses uridine(54) in tRNA + (6R)-5,10-methylene-5,6,7,8-tetrahydrofolate + NADH + H(+) = 5-methyluridine(54) in tRNA + (6S)-5,6,7,8-tetrahydrofolate + NAD(+). It carries out the reaction uridine(54) in tRNA + (6R)-5,10-methylene-5,6,7,8-tetrahydrofolate + NADPH + H(+) = 5-methyluridine(54) in tRNA + (6S)-5,6,7,8-tetrahydrofolate + NADP(+). Catalyzes the folate-dependent formation of 5-methyl-uridine at position 54 (M-5-U54) in all tRNAs. This Listeria monocytogenes serovar 1/2a (strain ATCC BAA-679 / EGD-e) protein is Methylenetetrahydrofolate--tRNA-(uracil-5-)-methyltransferase TrmFO.